Here is a 76-residue protein sequence, read N- to C-terminus: Secreted RxLR effector protein 31 (76 aa).

The N-terminal stretch at M1–C24 is a signal peptide. The short motif at R49–R64 is the RxLR-dEER element. A glycan (N-linked (GlcNAc...) asparagine) is linked at N54.

Belongs to the RxLR effector family.

The protein resides in the secreted. It is found in the host nucleus. The protein localises to the host cytoplasm. Secreted effector that dos not suppress the host cell death induced by cell death-inducing proteins. The protein is Secreted RxLR effector protein 31 of Plasmopara viticola (Downy mildew of grapevine).